A 200-amino-acid polypeptide reads, in one-letter code: BREX protein BrxB (200 aa).

The protein belongs to the BrxB family.

Functionally, BREX systems (bacteriophage exclusion) provide immunity against bacteriophage. Part of a type 1 BREX system which protects against dsDNA phage. This system allows phage adsorption but prevents phage DNA replication, without degradation of the phage DNA. Methylation of bacterial DNA by PglX guides self/non-self discrimination. When the brxA-brxB-brxC-pglX-pglZ-brxL genes are transformed into a susceptible E.coli strain (BW25113) they confer very high resistance to infection by bacteriophage VR7 and VpaE1, about 100-fold protection against lambda, T5 and T7 and no protection against RNA phage Qbeta, ssDNA phage M13 or dSDNA phage T4 and VR5. Glycosylated phage DNA is not susceptible to BREX. The BREX system does not confer resistance to lysogenic lambda phage, i.e. prophage that are integrated into the chromosomal DNA and then induced to form phage. The chain is BREX protein BrxB from Escherichia coli O9:H4 (strain HS).